A 572-amino-acid polypeptide reads, in one-letter code: Transmembrane glycoprotein NMB (572 aa).

The N-terminal stretch at 1 to 22 is a signal peptide; the sequence is MESLCGVLVFLLLAAGLPLQAA. Topologically, residues 23–500 are extracellular; it reads KRFRDVLGHE…DLGSPLRTVN (478 aa). N-linked (GlcNAc...) asparagine glycosylation is found at N93, N134, N200, N249, N275, N296, N300, N306, and N312. One can recognise a PKD domain in the interval 251-338; the sequence is SDETFLRDLP…SPSSSTSPSP (88 aa). The interval 321 to 359 is disordered; sequence GPCPSPTPSPSSSTSPSPASSPSPTLSTPSPSLMPTGHK. The span at 330-356 shows a compositional bias: low complexity; that stretch reads PSSSTSPSPASSPSPTLSTPSPSLMPT. Residues N461 and N469 are each glycosylated (N-linked (GlcNAc...) asparagine). Residues 501-521 form a helical membrane-spanning segment; that stretch reads GVLISIGCLAMFVTMVTILLY. At 522 to 572 the chain is on the cytoplasmic side; sequence KKHKTYKPIGNCTRNVVKGKGLSVFLSHAKAPFSRGDREKDPLLQDKPWML. Residue S544 is modified to Phosphoserine. Residues 556 to 558 carry the Cell attachment site motif; that stretch reads RGD.

Belongs to the PMEL/NMB family.

It is found in the cell membrane. The protein localises to the melanosome membrane. It localises to the early endosome membrane. In terms of biological role, could be a melanogenic enzyme. This Rattus norvegicus (Rat) protein is Transmembrane glycoprotein NMB (Gpnmb).